The sequence spans 479 residues: Glycogen synthase (479 aa).

Position 15 (Lys-15) interacts with ADP-alpha-D-glucose.

Belongs to the glycosyltransferase 1 family. Bacterial/plant glycogen synthase subfamily.

The enzyme catalyses [(1-&gt;4)-alpha-D-glucosyl](n) + ADP-alpha-D-glucose = [(1-&gt;4)-alpha-D-glucosyl](n+1) + ADP + H(+). It functions in the pathway glycan biosynthesis; glycogen biosynthesis. Functionally, synthesizes alpha-1,4-glucan chains using ADP-glucose. In Clostridium novyi (strain NT), this protein is Glycogen synthase.